The primary structure comprises 106 residues: Ig kappa chain C region, A allele (106 aa).

The 98-residue stretch at 5–102 (PTVSIFPPSM…SSSPVVKSFN (98 aa)) folds into the Ig-like domain. A disulfide bond links cysteine 26 and cysteine 86.

This chain is Ig kappa chain C region, A allele, found in Rattus norvegicus (Rat).